A 271-amino-acid chain; its full sequence is 3-methyl-2-oxobutanoate hydroxymethyltransferase (271 aa).

Mg(2+)-binding residues include Asp-51 and Asp-90. 3-methyl-2-oxobutanoate contacts are provided by residues 51–52 (DS), Asp-90, and Lys-118. Glu-120 contributes to the Mg(2+) binding site. Catalysis depends on Glu-186, which acts as the Proton acceptor.

Belongs to the PanB family. Homodecamer; pentamer of dimers. The cofactor is Mg(2+).

The protein resides in the cytoplasm. The catalysed reaction is 3-methyl-2-oxobutanoate + (6R)-5,10-methylene-5,6,7,8-tetrahydrofolate + H2O = 2-dehydropantoate + (6S)-5,6,7,8-tetrahydrofolate. The protein operates within cofactor biosynthesis; (R)-pantothenate biosynthesis; (R)-pantoate from 3-methyl-2-oxobutanoate: step 1/2. Functionally, catalyzes the reversible reaction in which hydroxymethyl group from 5,10-methylenetetrahydrofolate is transferred onto alpha-ketoisovalerate to form ketopantoate. In Xanthomonas euvesicatoria pv. vesicatoria (strain 85-10) (Xanthomonas campestris pv. vesicatoria), this protein is 3-methyl-2-oxobutanoate hydroxymethyltransferase.